Reading from the N-terminus, the 331-residue chain is NADH-quinone oxidoreductase subunit H 2 (331 aa).

The next 8 membrane-spanning stretches (helical) occupy residues 6-26, 79-99, 120-140, 155-175, 193-213, 242-262, 271-291, and 310-330; these read AGFL…LLVA, IFML…AVIP, VGLL…ALGG, GAAQ…PVVM, PFIL…MAEI, LFFL…AVLF, LPPV…MIWV, and VLIP…LWMG.

The protein belongs to the complex I subunit 1 family. In terms of assembly, NDH-1 is composed of 14 different subunits. Subunits NuoA, H, J, K, L, M, N constitute the membrane sector of the complex.

Its subcellular location is the cell inner membrane. It catalyses the reaction a quinone + NADH + 5 H(+)(in) = a quinol + NAD(+) + 4 H(+)(out). NDH-1 shuttles electrons from NADH, via FMN and iron-sulfur (Fe-S) centers, to quinones in the respiratory chain. The immediate electron acceptor for the enzyme in this species is believed to be ubiquinone. Couples the redox reaction to proton translocation (for every two electrons transferred, four hydrogen ions are translocated across the cytoplasmic membrane), and thus conserves the redox energy in a proton gradient. This subunit may bind ubiquinone. This Syntrophobacter fumaroxidans (strain DSM 10017 / MPOB) protein is NADH-quinone oxidoreductase subunit H 2.